We begin with the raw amino-acid sequence, 321 residues long: Gap junction delta-2 protein (321 aa).

Residues 1–19 (MGEWTILERLLEAAVQQHS) are Cytoplasmic-facing. The chain crosses the membrane as a helical span at residues 20–42 (TMIGRILLTVVVIFRILIVAIVG). Residues 43 to 75 (ETVYDDEQTMFVCNTLQPGCNQACYDRAFPISH) lie on the Extracellular side of the membrane. The chain crosses the membrane as a helical span at residues 76–98 (IRYWVFQIIMVCTPSLCFITYSV). The Cytoplasmic segment spans residues 99-197 (HQSAKQRERR…KLRRQEGISR (99 aa)). Residues 120 to 141 (PAESIGGPGGTGGGGSGGSKRE) are disordered. Positions 125 to 137 (GGPGGTGGGGSGG) are enriched in gly residues. A helical transmembrane segment spans residues 198-220 (FYIIQVVFRNALEIGFLVGQYFL). Over 221–252 (YGFSVPGLYECNRYPCIKEVECYVSRPTEKTV) the chain is Extracellular. The helical transmembrane segment at 253 to 275 (FLVFMFAVSGICVVLNLAELNHL) threads the bilayer. Residues 276–321 (GWRKIKLAVRGAQAKRKSVYEIRNKDLPRVSVPNFGRTQSSDSAYV) lie on the Cytoplasmic side of the membrane.

This sequence belongs to the connexin family. Delta-type subfamily. As to quaternary structure, a connexon is composed of a hexamer of connexins. In terms of tissue distribution, highly expressed in neurons.

Its subcellular location is the cell membrane. The protein resides in the cell junction. It is found in the gap junction. Functionally, one gap junction consists of a cluster of closely packed pairs of transmembrane channels, the connexons, through which materials of low MW diffuse from one cell to a neighboring cell. The polypeptide is Gap junction delta-2 protein (Gjd2) (Mus musculus (Mouse)).